The sequence spans 296 residues: 4-hydroxybenzoate octaprenyltransferase (296 aa).

8 consecutive transmembrane segments (helical) span residues 28-48 (PIGI…AGKG), 52-72 (LANI…GCVI), 102-122 (ALVF…CTNA), 146-166 (YYPQ…AFTA), 169-189 (GELP…TVGY), 219-239 (VIIL…GSKF), 241-261 (LGMW…WEFW), and 275-295 (FLHN…DYAL).

It belongs to the UbiA prenyltransferase family. The cofactor is Mg(2+).

Its subcellular location is the cell inner membrane. It carries out the reaction all-trans-octaprenyl diphosphate + 4-hydroxybenzoate = 4-hydroxy-3-(all-trans-octaprenyl)benzoate + diphosphate. It functions in the pathway cofactor biosynthesis; ubiquinone biosynthesis. Its function is as follows. Catalyzes the prenylation of para-hydroxybenzoate (PHB) with an all-trans polyprenyl group. Mediates the second step in the final reaction sequence of ubiquinone-8 (UQ-8) biosynthesis, which is the condensation of the polyisoprenoid side chain with PHB, generating the first membrane-bound Q intermediate 3-octaprenyl-4-hydroxybenzoate. This Pseudomonas fluorescens (strain Pf0-1) protein is 4-hydroxybenzoate octaprenyltransferase.